We begin with the raw amino-acid sequence, 1188 residues long: Adenomatous polyposis coli protein-related protein 1 (1188 aa).

A disordered region spans residues 1–50 (MSSSSSDENETTIHRTGSNTGGSGIYSQPRAGSSKRTSNVRHDVSDVDDE). Positions 1 to 486 (MSSSSSDENE…LSLRATRASP (486 aa)) are required for interaction with bar-1 and hmp-2. The stretch at 314–358 (NCLKVLASLLSPDARFTSLVDSATGILKYVSQYLANTSTHLELRS) is one ARM repeat. The span at 579-588 (IQQQQQMQKA) shows a compositional bias: low complexity. 6 disordered regions span residues 579–624 (IQQQ…SMNP), 670–702 (TESE…DGAT), 726–751 (TPNG…GPSL), 778–952 (QSEM…TMRF), 1003–1092 (CSMI…LKDK), and 1157–1181 (YQKP…PNPK). The segment at 600 to 1188 (DLDIPTSTVM…NPKQMLVTIV (589 aa)) is required for interaction with pry-1. Polar residues-rich tracts occupy residues 604–624 (PTST…SMNP) and 677–701 (LTSQ…SDGA). 2 stretches are compositionally biased toward polar residues: residues 778 to 788 (QSEMPTSSSTP) and 800 to 811 (FSPTQKTTSSPA). Basic and acidic residues-rich tracts occupy residues 832-843 (RRQDASDADRLL) and 871-900 (EPER…DHNG). Polar residues-rich tracts occupy residues 909–929 (WSPQ…SSED), 937–946 (EPNSSTSGAA), 1014–1039 (QRNE…SASS), and 1164–1180 (GRNN…TPNP).

This sequence belongs to the adenomatous polyposis coli (APC) family. As to quaternary structure, interacts (via N-terminus) with bar-1 and hmp-2; the interaction with hmp-2 is relatively weak. Interacts (via C-terminus) with pry-1 (via N-terminus). Probably associates with bar-1, gsk-3, pry-1 in a complex. During the L1 stage, expressed in vulval precursor cells (P3-8.p), seam cells and excretory cells.

It is found in the cell junction. Its subcellular location is the adherens junction. The protein localises to the cytoplasm. The protein resides in the nucleus. Has a role in endoderm cell specification and pharyngeal development. Required for the migration of epithelial cells, organization of the anterior seam cells and ceh-13 expression during embryo morphogenesis. Prevents hyperactivation of the Wnt signaling pathway during endoderm development, probably by preventing hmp-2 nuclear translocation. During larval development, apr-1 is required for expression of lin-39 in P3-8.p. Shown to negatively regulate Wnt signaling in vulval precursor cells. Has a role in cell division by establishing the polarity of the mother cell which forms the asymmetries of the daughter nuclei. During the L4 larval stage, it is required for the asymmetric division and self-renewal of seam cells. Thought to regulate export of wrm-1 from the nucleus possibly as part of a complex involving pry-1. The polypeptide is Adenomatous polyposis coli protein-related protein 1 (Caenorhabditis elegans).